We begin with the raw amino-acid sequence, 498 residues long: ATP synthase subunit beta, chloroplastic (498 aa).

An ATP-binding site is contributed by 172-179 (GGAGVGKT).

It belongs to the ATPase alpha/beta chains family. As to quaternary structure, F-type ATPases have 2 components, CF(1) - the catalytic core - and CF(0) - the membrane proton channel. CF(1) has five subunits: alpha(3), beta(3), gamma(1), delta(1), epsilon(1). CF(0) has four main subunits: a(1), b(1), b'(1) and c(9-12).

Its subcellular location is the plastid. The protein localises to the chloroplast thylakoid membrane. The enzyme catalyses ATP + H2O + 4 H(+)(in) = ADP + phosphate + 5 H(+)(out). Functionally, produces ATP from ADP in the presence of a proton gradient across the membrane. The catalytic sites are hosted primarily by the beta subunits. This chain is ATP synthase subunit beta, chloroplastic, found in Populus alba (White poplar).